Reading from the N-terminus, the 514-residue chain is Cardiolipin synthase 2 (514 aa).

3 helical membrane-spanning segments follow: residues 7-27 (LIFF…FIDV), 41-61 (ILGI…CVIF), and 71-91 (LTWL…YLLF). 2 consecutive PLD phosphodiesterase domains span residues 249–276 (INYR…GDEY) and 427–454 (EKGF…DMRS). Residues His254, Lys256, Asp261, His432, Lys434, and Asp439 contribute to the active site.

It belongs to the phospholipase D family. Cardiolipin synthase subfamily.

The protein localises to the cell membrane. The catalysed reaction is 2 a 1,2-diacyl-sn-glycero-3-phospho-(1'-sn-glycerol) = a cardiolipin + glycerol. Catalyzes the reversible phosphatidyl group transfer from one phosphatidylglycerol molecule to another to form cardiolipin (CL) (diphosphatidylglycerol) and glycerol. This Bacillus cereus (strain ATCC 14579 / DSM 31 / CCUG 7414 / JCM 2152 / NBRC 15305 / NCIMB 9373 / NCTC 2599 / NRRL B-3711) protein is Cardiolipin synthase 2 (cls2).